We begin with the raw amino-acid sequence, 517 residues long: Splicing factor U2AF 59 kDa subunit (517 aa).

The span at 1–13 shows a compositional bias: low complexity; the sequence is MDLSSRLSSGSSR. Positions 1–112 are disordered; it reads MDLSSRLSSG…PSRERSVRSI (112 aa). Residues 20-89 show a composition bias toward basic and acidic residues; that stretch reads DYRDEEPRRE…RRYDDYEPRS (70 aa). RRM domains are found at residues 310-388 and 418-509; these read DKIY…FACV and RVLQ…FYGE.

This sequence belongs to the splicing factor SR family. In terms of assembly, forms a heterodimer with the U2AF small subunit. Can also form a homodimer. U2AF large subunit (U2AF59), U2AF small subunit (U2AF23) and SF1 (bpb1) interact to form a complex required for complex A formation. Interacts with wat1/pop3.

The protein resides in the nucleus. Functionally, necessary for the splicing of pre-mRNA. The SF1-U2AF59-U2AF23 complex has a role in the recognition of the branch site (5'-UACUAAC-3'), the pyrimidine tract and the 3'-splice site at the 3'-end of introns. The polypeptide is Splicing factor U2AF 59 kDa subunit (prp2) (Schizosaccharomyces pombe (strain 972 / ATCC 24843) (Fission yeast)).